Consider the following 669-residue polypeptide: PDF receptor (669 aa).

Topologically, residues 1 to 244 are extracellular; the sequence is MTLLSNILDC…DIARRTRTLE (244 aa). Residues 24-52 form a disordered region; that stretch reads RQSGSSGPSPSAPTAGTFESKSMLEPTSS. Residues 26–40 show a composition bias toward low complexity; sequence SGSSGPSPSAPTAGT. 6 N-linked (GlcNAc...) asparagine glycosylation sites follow: asparagine 111, asparagine 117, asparagine 130, asparagine 137, asparagine 148, and asparagine 198. Residues 245–265 traverse the membrane as a helical segment; that stretch reads IVGLCLSLFALIVSLLIFCTF. At 266–274 the chain is on the cytoplasmic side; it reads RSLRNNRTK. A helical transmembrane segment spans residues 275 to 295; it reads IHKNLFVAMVLQVIIRLTLYL. At 296 to 334 the chain is on the extracellular side; the sequence is DQFRRGNKEAATNTSLSVIENTPYLCEASYVLLEYARTA. Asparagine 308 carries N-linked (GlcNAc...) asparagine glycosylation. The chain crosses the membrane as a helical span at residues 335–355; sequence MFMWMFIEGLYLHNMVTVAVF. The Cytoplasmic portion of the chain corresponds to 356–366; that stretch reads QGSFPLKFFSR. The chain crosses the membrane as a helical span at residues 367–387; sequence LGWCVPILMTTVWARCTVMYM. Residues 388–411 lie on the Extracellular side of the membrane; that stretch reads DTSLGECLWNYNLTPYYWILEGPR. A helical membrane pass occupies residues 412–432; sequence LAVILLNFCFLVNIIRVLVMK. At 433-449 the chain is on the cytoplasmic side; that stretch reads LRQSQASDIEQTRKAVR. The chain crosses the membrane as a helical span at residues 450-470; sequence AAIVLLPLLGITNLLHQLAPL. Residues 471 to 480 lie on the Extracellular side of the membrane; sequence KTATNFAVWS. A helical transmembrane segment spans residues 481–501; sequence YGTHFLTSFQGFFIALIYCFL. Over 502–669 the chain is Cytoplasmic; sequence NGEVRAVLLK…ESVVFELSEQ (168 aa). Disordered stretches follow at residues 536 to 573 and 590 to 614; these read AYNT…KPSS and PRLQ…AEPD. Basic and acidic residues predominate over residues 595–609; the sequence is KAREKGKDRVEKTDA.

The protein belongs to the G-protein coupled receptor 2 family. As to expression, mainly present in clock neurons of the brain. Localizes in all 4 s-LNv neurons, 1 LNd neuron, 7 DN1 neurons, and 1 DN3 neuron. In addition to the clock neurons, it is also present in approximately 13 pairs of neurons along the ventral nerve cord in third instar larvae, which do not overlap with dopaminergic or serotonergic neurons. Not present in DN2 neurons (at protein level).

It is found in the cell membrane. Its function is as follows. Receptor for PDF, a neuropeptide controlling circadian behavioral rhythms. Probably regulates circadian behavioral rhythms through coordination of activities of clock neurons. PDF-binding results in the elevation of cAMP synthesis. Plays a role in sleep regulation and regulates the state transition from sleep to wake. This chain is PDF receptor, found in Drosophila melanogaster (Fruit fly).